The primary structure comprises 414 residues: Histidine--tRNA ligase (414 aa).

It belongs to the class-II aminoacyl-tRNA synthetase family. As to quaternary structure, homodimer.

Its subcellular location is the cytoplasm. The catalysed reaction is tRNA(His) + L-histidine + ATP = L-histidyl-tRNA(His) + AMP + diphosphate + H(+). This Mycoplasma genitalium (strain ATCC 33530 / DSM 19775 / NCTC 10195 / G37) (Mycoplasmoides genitalium) protein is Histidine--tRNA ligase (hisS).